Reading from the N-terminus, the 1043-residue chain is MNFSVITCPNGGTNQGLLPYLMALDQYQLEEFKLCLEPQQLMDFWSAPQGHFPRIPWANLRAADPLNLSFLLDEHFPKGQAWKVVLGIFQTMNLTSLCEKVRAEMKENVQTQELQDPTQEDLEMLEAAAGNMQTQGCQDPNQEELDELEEETGNVQAQGCQDPNQEEPEMLEEADHRRKYRENMKAELLETWDNISWPKDHVYIRNTSKDEHEELQRLLDPNRTRAQAQTIVLVGRAGVGKTTLAMQAMLHWANGVLFQQRFSYVFYLSCHKIRYMKETTFAELISLDWPDFDAPIEEFMSQPEKLLFIIDGFEEIIISESRSESLDDGSPCTDWYQELPVTKILHSLLKKELVPLATLLITIKTWFVRDLKASLVNPCFVQITGFTGDDLRVYFMRHFDDSSEVEKILQQLRKNETLFHSCSAPMVCWTVCSCLKQPKVRYYDLQSITQTTTSLYAYFFSNLFSTAEVDLADDSWPGQWRALCSLAIEGLWSMNFTFNKEDTEIEGLEVPFIDSLYEFNILQKINDCGGCTTFTHLSFQEFFAAMSFVLEEPREFPPHSTKPQEMKMLLQHVLLDKEAYWTPVVLFFFGLLNKNIARELEDTLHCKISPRVMEELLKWGEELGKAESASLQFHILRLFHCLHESQEEDFTKKMLGRIFEVDLNILEDEELQASSFCLKHCKRLNKLRLSVSSHILERDLEILETSKFDSRMHAWNSICSTLVTNENLHELDLSNSKLHASSVKGLCLALKNPRCKVQKLTCKSVTPEWVLQDLIIALQGNSKLTHLNFSSNKLGMTVPLILKALRHSACNLKYLCLEKCNLSAASCQDLALFLTSIQHVTRLCLGFNRLQDDGIKLLCAALTHPKCALERLELWFCQLAAPACKHLSDALLQNRSLTHLNLSKNSLRDEGVKFLCEALGRPDGNLQSLNLSGCSFTREGCGELANALSHNHNVKILDLGENDLQDDGVKLLCEALKPHRALHTLGLAKCNLTTACCQHLFSVLSSSKSLVNLNLLGNELDTDGVKMLCKALKKSTCRLQKLG.

One can recognise a Pyrin domain in the interval 1-107 (MNFSVITCPN…CEKVRAEMKE (107 aa)). In terms of domain architecture, NACHT spans 229 to 558 (QTIVLVGRAG…VLEEPREFPP (330 aa)). 235–242 (GRAGVGKT) contacts ATP. LRR repeat units follow at residues 725–749 (NENLHELDLSNSKLHASSVKGLCLA), 781–804 (NSKLTHLNFSSNKLGMTVPLILKA), 837–864 (IQHVTRLCLGFNRLQDDGIKLLCAALTH), 894–917 (NRSLTHLNLSKNSLRDEGVKFLCE), 923–946 (DGNLQSLNLSGCSFTREGCGELAN), 951–978 (NHNVKILDLGENDLQDDGVKLLCEALKP), and 1007–1030 (SKSLVNLNLLGNELDTDGVKMLCK).

This sequence belongs to the NLRP family.

In terms of biological role, involved in inflammation. This Homo sapiens (Human) protein is NACHT, LRR and PYD domains-containing protein 13 (NLRP13).